The sequence spans 152 residues: Transcription factor XE1.1 (152 aa).

Disordered regions lie at residues 1-54 and 123-152; these read RDDF…ANNA and KVSA…MGHM. 2 stretches are compositionally biased toward basic and acidic residues: residues 7–22 and 38–54; these read DDMK…EMKS and PEQK…ANNA. The bHLH domain occupies 47 to 100; sequence ERRMANNARERLRVRDINEAFKELGRMCQLHLKSEKPQTKLLILHQAVAVILNL. A class A specific domain region spans residues 102–125; sequence QQVRERNLNPKAACLKRREEEKVS. A compositionally biased stretch (polar residues) spans 143-152; sequence TDTTNPMGHM.

In terms of assembly, efficient DNA binding requires dimerization with another bHLH protein. Forms homo- or heterooligomers with myogenin, E12 and ITF2 proteins.

Its subcellular location is the nucleus. Its function is as follows. Transcriptional regulator. Involved in the initiation of neuronal differentiation. Activates transcription by binding to the E box-containing promoter. The chain is Transcription factor XE1.1 from Xenopus laevis (African clawed frog).